Here is a 667-residue protein sequence, read N- to C-terminus: E3 ubiquitin-protein ligase Midline-1 (667 aa).

The RING-type zinc-finger motif lies at Cys-10–Arg-60. Ser-92 and Ser-96 each carry phosphoserine. B box-type zinc fingers lie at residues Lys-116–Ile-165 and Gly-172–Leu-212. Residues Cys-119, Cys-122, Cys-134, Cys-137, Cys-142, Cys-145, His-150, His-159, Cys-175, His-178, Cys-198, and His-204 each coordinate Zn(2+). Residues Arg-205–Glu-264 are a coiled coil. Residues Leu-320 to Leu-379 form the COS domain. A Fibronectin type-III domain is found at Ala-381–Gln-484. Residues Ser-471–Pro-485 are compositionally biased toward polar residues. The segment at Ser-471–Ser-524 is disordered. Positions Asn-482–His-659 constitute a B30.2/SPRY domain. The segment covering Val-499–Glu-520 has biased composition (basic and acidic residues). Position 511 is a phosphoserine (Ser-511).

It belongs to the TRIM/RBCC family. As to quaternary structure, homodimer or heterodimer with MID2. Interacts with IGBP1.

The protein resides in the cytoplasm. It localises to the cytoskeleton. The enzyme catalyses S-ubiquitinyl-[E2 ubiquitin-conjugating enzyme]-L-cysteine + [acceptor protein]-L-lysine = [E2 ubiquitin-conjugating enzyme]-L-cysteine + N(6)-ubiquitinyl-[acceptor protein]-L-lysine.. In terms of biological role, has E3 ubiquitin ligase activity towards IGBP1, promoting its monoubiquitination, which results in deprotection of the catalytic subunit of protein phosphatase PP2A, and its subsequent degradation by polyubiquitination. The chain is E3 ubiquitin-protein ligase Midline-1 (Mid1) from Rattus norvegicus (Rat).